A 494-amino-acid polypeptide reads, in one-letter code: GTPase Der (494 aa).

EngA-type G domains follow at residues 2-164 and 235-407; these read KKIA…PEED and IKIS…KNYS. GTP-binding positions include 8 to 15, 55 to 59, 116 to 119, 241 to 248, 288 to 292, and 352 to 355; these read GRPNVGKS, DTGGL, NKID, GRTNVGKS, DTAGL, and NKWD. The region spanning 408–492 is the KH-like domain; that stretch reads QHIKTSELNV…PVLFKAKKRG (85 aa).

This sequence belongs to the TRAFAC class TrmE-Era-EngA-EngB-Septin-like GTPase superfamily. EngA (Der) GTPase family. As to quaternary structure, associates with the 50S ribosomal subunit.

In terms of biological role, GTPase that plays an essential role in the late steps of ribosome biogenesis. The polypeptide is GTPase Der (Sulfurimonas denitrificans (strain ATCC 33889 / DSM 1251) (Thiomicrospira denitrificans (strain ATCC 33889 / DSM 1251))).